The sequence spans 152 residues: Large ribosomal subunit protein uL22 (152 aa).

Positions 124 to 143 are enriched in low complexity; sequence APTKAASKKAAPAKQTTPAA. The interval 124–152 is disordered; sequence APTKAASKKAAPAKQTTPAATESKTEGAE.

This sequence belongs to the universal ribosomal protein uL22 family. As to quaternary structure, part of the 50S ribosomal subunit.

Its function is as follows. This protein binds specifically to 23S rRNA; its binding is stimulated by other ribosomal proteins, e.g. L4, L17, and L20. It is important during the early stages of 50S assembly. It makes multiple contacts with different domains of the 23S rRNA in the assembled 50S subunit and ribosome. The globular domain of the protein is located near the polypeptide exit tunnel on the outside of the subunit, while an extended beta-hairpin is found that lines the wall of the exit tunnel in the center of the 70S ribosome. The sequence is that of Large ribosomal subunit protein uL22 from Salinispora arenicola (strain CNS-205).